Reading from the N-terminus, the 365-residue chain is 2-aminoethylphosphonate--pyruvate transaminase (365 aa).

The residue at position 194 (Lys194) is an N6-(pyridoxal phosphate)lysine.

It belongs to the class-V pyridoxal-phosphate-dependent aminotransferase family. PhnW subfamily. In terms of assembly, homodimer. It depends on pyridoxal 5'-phosphate as a cofactor.

The enzyme catalyses (2-aminoethyl)phosphonate + pyruvate = phosphonoacetaldehyde + L-alanine. Functionally, involved in phosphonate degradation. This chain is 2-aminoethylphosphonate--pyruvate transaminase, found in Bacillus thuringiensis subsp. konkukian (strain 97-27).